The primary structure comprises 147 residues: Hemoglobin subunit epsilon (147 aa).

The region spanning 3–147 (HFTAEEKATI…VATALAHKYH (145 aa)) is the Globin domain. 2 positions are modified to phosphoserine: Ser14 and Ser51. 2 residues coordinate heme b: His64 and His93.

Belongs to the globin family. In terms of assembly, heterotetramer of two alpha chains and two epsilon chains in early embryonic hemoglobin Gower-2; two zeta chains and two epsilon chains in early embryonic hemoglobin Gower-1. Red blood cells.

In terms of biological role, the epsilon chain is a beta-type chain of early mammalian embryonic hemoglobin. This is Hemoglobin subunit epsilon (HBE1) from Daubentonia madagascariensis (Aye-aye).